Consider the following 328-residue polypeptide: MIQQMQMPEKLEVDEASYSNYYGKFIAQPLERGYGVTIGNAIRRVLLSSLPGTAITGIKIEGVLHEFSTIDGVKEDVPDIVLNLKQIRFRSISKRNAVVTLVLRGPKDFVAGDIVSPEGDFEVLNPEHHIATLNEDATLKIDVSVGRGRGYMPAEDNKPETMPIGYISVDSIFTPIRNVKYSVENTRVGQRTDYEKLSLEVETDGSIAPDEAVSMAGKIINDHVRLFSLFSPTQEEEVEEEVQQEDEEFENMRKLLMTRIEDLELSVRSHNCLRSAEIDTLGQLVSKREDELLGYKNFGKKSLAELKELLESKNLSFGMEVTKYRLNQ.

The segment at 1–231 is alpha N-terminal domain (alpha-NTD); that stretch reads MIQQMQMPEK…DHVRLFSLFS (231 aa). The interval 252-328 is alpha C-terminal domain (alpha-CTD); that stretch reads MRKLLMTRIE…MEVTKYRLNQ (77 aa).

It belongs to the RNA polymerase alpha chain family. Homodimer. The RNAP catalytic core consists of 2 alpha, 1 beta, 1 beta' and 1 omega subunit. When a sigma factor is associated with the core the holoenzyme is formed, which can initiate transcription.

It carries out the reaction RNA(n) + a ribonucleoside 5'-triphosphate = RNA(n+1) + diphosphate. DNA-dependent RNA polymerase catalyzes the transcription of DNA into RNA using the four ribonucleoside triphosphates as substrates. The polypeptide is DNA-directed RNA polymerase subunit alpha (Chloroherpeton thalassium (strain ATCC 35110 / GB-78)).